A 598-amino-acid polypeptide reads, in one-letter code: NADH-ubiquinone oxidoreductase chain 5 (598 aa).

16 consecutive transmembrane segments (helical) span residues 1-21 (MLEL…IFLF), 28-48 (FAES…ILLM), 81-101 (CFFV…FYYM), 115-135 (GLFL…QLLI), 171-191 (GDIG…DWSF), 193-213 (GLYA…LAAA), 233-253 (TPVS…FLLI), 265-285 (IQLM…ICAL), 293-312 (VVAF…VGAG), 323-343 (MHAF…HGLQ), 362-382 (SVCF…AGFF), 399-421 (WAVG…LLYF), 454-474 (VIAG…CLSL), 480-500 (LAAV…VNLL), 509-529 (IPEL…HKLI), and 576-596 (LIKM…GIMI).

It belongs to the complex I subunit 5 family.

The protein resides in the mitochondrion inner membrane. It carries out the reaction a ubiquinone + NADH + 5 H(+)(in) = a ubiquinol + NAD(+) + 4 H(+)(out). Functionally, core subunit of the mitochondrial membrane respiratory chain NADH dehydrogenase (Complex I) that is believed to belong to the minimal assembly required for catalysis. Complex I functions in the transfer of electrons from NADH to the respiratory chain. The immediate electron acceptor for the enzyme is believed to be ubiquinone. The chain is NADH-ubiquinone oxidoreductase chain 5 (ND5) from Branchiostoma lanceolatum (Common lancelet).